Reading from the N-terminus, the 288-residue chain is Quinate/shikimate dehydrogenase (288 aa).

K71 and D107 together coordinate substrate. NAD(+) is bound by residues 132-135 (AGGA), 155-158 (NRRD), K205, 232-235 (CVYN), and G255.

It belongs to the shikimate dehydrogenase family. As to quaternary structure, homodimer.

The enzyme catalyses L-quinate + NAD(+) = 3-dehydroquinate + NADH + H(+). It carries out the reaction L-quinate + NADP(+) = 3-dehydroquinate + NADPH + H(+). The catalysed reaction is shikimate + NADP(+) = 3-dehydroshikimate + NADPH + H(+). It catalyses the reaction shikimate + NAD(+) = 3-dehydroshikimate + NADH + H(+). Its pathway is metabolic intermediate biosynthesis; chorismate biosynthesis; chorismate from D-erythrose 4-phosphate and phosphoenolpyruvate: step 4/7. Its function is as follows. The actual biological function of YdiB remains unclear, nor is it known whether 3-dehydroshikimate or quinate represents the natural substrate. Catalyzes the reversible NAD-dependent reduction of both 3-dehydroshikimate (DHSA) and 3-dehydroquinate to yield shikimate (SA) and quinate, respectively. It can use both NAD or NADP for catalysis, however it has higher catalytic efficiency with NAD. The sequence is that of Quinate/shikimate dehydrogenase from Escherichia coli O1:K1 / APEC.